The sequence spans 88 residues: MKIIPLADRVLVKTDKSETKTASGIIIPDTAQEKMQSGTVIAVGSDSEKIKVSVGQRVMHDKYAGNPVKIDGEEHLLLKGADILAVIE.

This sequence belongs to the GroES chaperonin family. In terms of assembly, heptamer of 7 subunits arranged in a ring. Interacts with the chaperonin GroEL.

Its subcellular location is the cytoplasm. Together with the chaperonin GroEL, plays an essential role in assisting protein folding. The GroEL-GroES system forms a nano-cage that allows encapsulation of the non-native substrate proteins and provides a physical environment optimized to promote and accelerate protein folding. GroES binds to the apical surface of the GroEL ring, thereby capping the opening of the GroEL channel. This is Co-chaperonin GroES from Treponema pallidum (strain Nichols).